Consider the following 228-residue polypeptide: Carboxy-S-adenosyl-L-methionine synthase (228 aa).

Residues Y30, 55-57 (GSS), 79-80 (DN), and 103-104 (DV) each bind S-adenosyl-L-methionine.

Belongs to the class I-like SAM-binding methyltransferase superfamily. Cx-SAM synthase family.

It catalyses the reaction prephenate + S-adenosyl-L-methionine = carboxy-S-adenosyl-L-methionine + 3-phenylpyruvate + H2O. In terms of biological role, catalyzes the conversion of S-adenosyl-L-methionine (SAM) to carboxy-S-adenosyl-L-methionine (Cx-SAM). The polypeptide is Carboxy-S-adenosyl-L-methionine synthase (Staphylococcus epidermidis (strain ATCC 35984 / DSM 28319 / BCRC 17069 / CCUG 31568 / BM 3577 / RP62A)).